The primary structure comprises 211 residues: MNSAQKKPQPPPLSLPWFQSVNRFWVQNQGRFMAKIMPGEYYVTNQQELIGTVLGSCISACVRDPASGIGGMNHFMLPQNAGGGRMDILSDAFRYGNYAMEHLINDVMKLTGKRSTLEVKIFGGANVIRGMSSVGDKNIEFVRRYLEVDGFKIASEDVGGDYPRKILYDPTNGKVMMKRLKSLHNDTVIQREEHYMDELSHTKVAGDVDLF.

Belongs to the CheD family.

It catalyses the reaction L-glutaminyl-[protein] + H2O = L-glutamyl-[protein] + NH4(+). Functionally, probably deamidates glutamine residues to glutamate on methyl-accepting chemotaxis receptors (MCPs), playing an important role in chemotaxis. The chain is Probable chemoreceptor glutamine deamidase CheD from Hahella chejuensis (strain KCTC 2396).